We begin with the raw amino-acid sequence, 673 residues long: Forkhead box protein O3 (673 aa).

A disordered region spans residues Met1–Arg153. Position 30 is a phosphoserine; by AMPK (Ser30). The residue at position 32 (Thr32) is a Phosphothreonine; by PKB/AKT1. N6-methyllysine is present on Lys46. Positions Ile57–Asp68 are enriched in acidic residues. The span at Ile79 to Gly89 shows a compositional bias: gly residues. The required for mitochondrial import stretch occupies residues Gly80–Pro108. Lys149 is modified (N6-methyllysine). The segment at residues Trp157 to Ala251 is a DNA-binding region (fork-head). Position 179 is a phosphothreonine; by AMPK (Thr179). At Ser209 the chain carries Phosphoserine; by STK4/MST1. Ser215 bears the Phosphoserine; by MAPKAPK5 mark. N6-methyllysine is present on Lys230. The segment at Ser231 to Glu302 is disordered. Lys242 is modified (N6-acetyllysine). The Nuclear localization signal motif lies at Lys242 to Lys259. A Phosphoserine; by PKB/AKT1 and MAPKAPK5 modification is found at Ser253. Residues Thr261–Ala272 show a composition bias toward basic residues. Lys262 and Lys271 each carry N6-methyllysine. Phosphoserine occurs at positions 280 and 284. The segment covering Asp283–Arg298 has biased composition (polar residues). An N6-methyllysine modification is found at Lys290. Ser294 carries the post-translational modification Phosphoserine. A Phosphoserine; by CaMK2A modification is found at Ser299. The mediates interaction with CHUK/IKKA and IKBKB/IKKB stretch occupies residues Ser300 to Gly673. A Phosphoserine modification is found at Ser311. Ser315 carries the post-translational modification Phosphoserine; by SGK1. 2 positions are modified to phosphoserine; by AMPK: Ser399 and Ser413. Lys419 is subject to N6-methyllysine. Ser421 bears the Phosphoserine mark. The tract at residues His536–Leu587 is disordered. The span at Ala549–Thr582 shows a compositional bias: polar residues. The residue at position 551 (Ser551) is a Phosphoserine; by MAPKAPK5. A Phosphoserine; by AMPK and MAPKAPK5 modification is found at Ser555. Phosphoserine; by AMPK is present on residues Ser588 and Ser626. A Phosphoserine; by IKKB modification is found at Ser644.

Upon metabolic stress, forms a complex composed of FOXO3, SIRT3 and mitochondrial RNA polymerase POLRMT; the complex is recruited to mtDNA in a SIRT3-dependent manner. Also forms a complex composed of FOXO3, SIRT3, TFAM and POLRMT. Interacts with SIRT2; the interaction occurs independently of SIRT2 deacetylase activity. Interacts with YWHAB/14-3-3-beta and YWHAZ/14-3-3-zeta, which are required for cytosolic sequestration. Upon oxidative stress, interacts with STK4/MST1, which disrupts interaction with YWHAB/14-3-3-beta and leads to nuclear translocation. Interacts with PIM1. Interacts with DDIT3/CHOP. Interacts (deacetylated form) with SKP2. Interacts with CHUK and IKBKB. Interacts with CAMK2A, CAMK2B and calcineurin A. Interacts with NUPR1; this interaction represses FOXO3 transactivation. In terms of processing, in the presence of survival factors such as IGF1, phosphorylated on Thr-32 and Ser-253 by AKT1/PKB. This phosphorylated form then interacts with 14-3-3 proteins and is retained in the cytoplasm. Survival factor withdrawal induces dephosphorylation and promotes translocation to the nucleus where the dephosphorylated protein induces transcription of target genes and triggers apoptosis. Although AKT1/PKB doesn't appear to phosphorylate Ser-315 directly, it may activate other kinases that trigger phosphorylation at this residue. Phosphorylated by STK4/MST1 on Ser-209 upon oxidative stress, which leads to dissociation from YWHAB/14-3-3-beta and nuclear translocation. Phosphorylated by PIM1. Phosphorylation by AMPK leads to the activation of transcriptional activity without affecting subcellular localization. In response to metabolic stress, phosphorylated by AMPK on Ser-30 which mediates FOXO3 mitochondrial translocation. Phosphorylation by MAPKAPK5 promotes nuclear localization and DNA-binding, leading to induction of miR-34b and miR-34c expression, 2 post-transcriptional regulators of MYC that bind to the 3'UTR of MYC transcript and prevent its translation. Phosphorylated by CHUK/IKKA and IKBKB/IKKB. TNF-induced inactivation of FOXO3 requires its phosphorylation at Ser-644 by IKBKB/IKKB which promotes FOXO3 retention in the cytoplasm, polyubiquitination and ubiquitin-mediated proteasomal degradation. May be dephosphorylated by calcineurin A on Ser-299 which abolishes FOXO3 transcriptional activity. In cancer cells, ERK mediated-phosphorylation of Ser-12 is required for mitochondrial translocation of FOXO3 in response to metabolic stress or chemotherapeutic agents. Phosphorylation at Ser-253 promotes its degradation by the proteasome. Dephosphorylation at Ser-253 by protein phosphatase 2A (PPP2CA) promotes its stabilization; interaction with PPP2CA is enhanced by AMBRA1. Deacetylation by SIRT1 or SIRT2 stimulates interaction of FOXO3 with SKP2 and facilitates SCF(SKP2)-mediated FOXO3 ubiquitination and proteasomal degradation. Deacetylation by SIRT2 stimulates FOXO3-mediated transcriptional activity in response to oxidative stress. Deacetylated by SIRT3. Deacetylation by SIRT3 stimulates FOXO3-mediated mtDNA transcriptional activity in response to metabolic stress. Post-translationally, heavily methylated by SET9 which decreases stability, while moderately increasing transcriptional activity. The main methylation site is Lys-271. Methylation doesn't affect subcellular location. In terms of processing, polyubiquitinated. Ubiquitinated by a SCF complex containing SKP2, leading to proteasomal degradation. The N-terminus is cleaved following import into the mitochondrion. Ubiquitous.

Its subcellular location is the cytoplasm. The protein resides in the cytosol. It localises to the nucleus. The protein localises to the mitochondrion matrix. It is found in the mitochondrion outer membrane. In terms of biological role, transcriptional activator that recognizes and binds to the DNA sequence 5'-[AG]TAAA[TC]A-3' and regulates different processes, such as apoptosis and autophagy. Acts as a positive regulator of autophagy in skeletal muscle: in starved cells, enters the nucleus following dephosphorylation and binds the promoters of autophagy genes, such as GABARAP1L, MAP1LC3B and ATG12, thereby activating their expression, resulting in proteolysis of skeletal muscle proteins. Triggers apoptosis in the absence of survival factors, including neuronal cell death upon oxidative stress. Participates in post-transcriptional regulation of MYC: following phosphorylation by MAPKAPK5, promotes induction of miR-34b and miR-34c expression, 2 post-transcriptional regulators of MYC that bind to the 3'UTR of MYC transcript and prevent its translation. In response to metabolic stress, translocates into the mitochondria where it promotes mtDNA transcription. In response to metabolic stress, translocates into the mitochondria where it promotes mtDNA transcription. Also acts as a key regulator of chondrogenic commitment of skeletal progenitor cells in response to lipid availability: when lipids levels are low, translocates to the nucleus and promotes expression of SOX9, which induces chondrogenic commitment and suppresses fatty acid oxidation. Also acts as a key regulator of regulatory T-cells (Treg) differentiation by activating expression of FOXP3. This is Forkhead box protein O3 from Homo sapiens (Human).